The sequence spans 166 residues: Small ribosomal subunit protein uS5 (166 aa).

The 64-residue stretch at 11–74 (LQEKLIAVNR…EKARRNMINV (64 aa)) folds into the S5 DRBM domain.

The protein belongs to the universal ribosomal protein uS5 family. Part of the 30S ribosomal subunit. Contacts proteins S4 and S8.

With S4 and S12 plays an important role in translational accuracy. Its function is as follows. Located at the back of the 30S subunit body where it stabilizes the conformation of the head with respect to the body. The chain is Small ribosomal subunit protein uS5 from Cronobacter sakazakii (strain ATCC BAA-894) (Enterobacter sakazakii).